The sequence spans 1412 residues: DNA-directed RNA polymerase subunit beta' (1412 aa).

Zn(2+) contacts are provided by cysteine 70, cysteine 72, cysteine 85, and cysteine 88. Residues aspartate 460, aspartate 462, and aspartate 464 each contribute to the Mg(2+) site. Residues cysteine 819, cysteine 893, cysteine 900, and cysteine 903 each coordinate Zn(2+). Positions 1393–1412 (EAFEFGTPSAPAEEPQHPAE) are disordered.

Belongs to the RNA polymerase beta' chain family. As to quaternary structure, the RNAP catalytic core consists of 2 alpha, 1 beta, 1 beta' and 1 omega subunit. When a sigma factor is associated with the core the holoenzyme is formed, which can initiate transcription. Mg(2+) serves as cofactor. Requires Zn(2+) as cofactor.

The catalysed reaction is RNA(n) + a ribonucleoside 5'-triphosphate = RNA(n+1) + diphosphate. In terms of biological role, DNA-dependent RNA polymerase catalyzes the transcription of DNA into RNA using the four ribonucleoside triphosphates as substrates. The sequence is that of DNA-directed RNA polymerase subunit beta' from Burkholderia pseudomallei (strain 1106a).